Reading from the N-terminus, the 179-residue chain is Macro domain-containing protein XCC3184 (179 aa).

Residues 1-175 (MRIEVWQGDI…AYHQALATQE (175 aa)) enclose the Macro domain.

This sequence belongs to the MacroD-type family.

This Xanthomonas campestris pv. campestris (strain ATCC 33913 / DSM 3586 / NCPPB 528 / LMG 568 / P 25) protein is Macro domain-containing protein XCC3184.